A 209-amino-acid polypeptide reads, in one-letter code: Non-structural protein 5 (209 aa).

Asp86 serves as a coordination point for Mg(2+).

Belongs to the rotavirus NSP5 family. Homodimer. Interacts with VP1. Interacts with VP2. Interacts with NSP2 and NSP6. Mg(2+) is required as a cofactor. O-glycosylated.

The protein resides in the host cytoplasm. Its function is as follows. Plays an essential role in the viral genome replication. Participates, together with NSP2, in the formation of viral factories (viroplasms) which are large inclusions in the host cytoplasm where replication intermediates are assembled and viral RNA replication takes place. Orchestrates the recruitment of viroplasmic proteins such as capsid proteins to these factories. This Bos taurus (Bovine) protein is Non-structural protein 5.